Reading from the N-terminus, the 559-residue chain is DNA primase (559 aa).

The CHC2-type zinc finger occupies 37–61; that stretch reads CPFHEERSASFSVNQVKGFYYCFGC. The Toprim domain maps to 246–327; that stretch reads KQVIVTEGYL…KGGVILFENN (82 aa). 3 residues coordinate Mg(2+): E252, D296, and D298.

Belongs to the DnaG primase family. As to quaternary structure, monomer. Interacts with DnaB. Requires Zn(2+) as cofactor. Mg(2+) serves as cofactor.

The enzyme catalyses ssDNA + n NTP = ssDNA/pppN(pN)n-1 hybrid + (n-1) diphosphate.. Functionally, RNA polymerase that catalyzes the synthesis of short RNA molecules used as primers for DNA polymerase during DNA replication. In Helicobacter pylori (strain J99 / ATCC 700824) (Campylobacter pylori J99), this protein is DNA primase.